Consider the following 135-residue polypeptide: Galectin-1 (135 aa).

Alanine 2 carries the N-acetylalanine modification. A Galectin domain is found at 4 to 135 (GLVASNLNLK…DFKIKCVAFD (132 aa)). N6-acetyllysine is present on residues lysine 13 and lysine 29. Phosphoserine; by FAM20C is present on serine 30. A beta-D-galactoside-binding positions include 45–49 (HFNPR), histidine 53, asparagine 62, and 69–72 (WGTE). Lysine 108 bears the N6-acetyllysine; alternate mark. N6-succinyllysine; alternate is present on lysine 108. Lysine 128 carries the N6-acetyllysine modification.

Homodimer. Binds LGALS3BP. Interacts with CD2, CD3, CD4, CD6, CD7, CD43, ALCAM and CD45. Interacts with laminin (via poly-N-acetyllactosamine). Interacts with SUSD2. Interacts with cargo receptor TMED10; the interaction mediates the translocation from the cytoplasm into the ERGIC (endoplasmic reticulum-Golgi intermediate compartment) and thereby secretion. Interacts with CD69. In terms of tissue distribution, expressed in placenta, maternal decidua and fetal membranes. Within placenta, expressed in trophoblasts, stromal cells, villous endothelium, syncytiotrophoblast apical membrane and villous stroma. Within fetal membranes, expressed in amnion, chorioamniotic mesenchyma and chorion (at protein level). Expressed in cardiac, smooth, and skeletal muscle, neurons, thymus, kidney and hematopoietic cells.

It localises to the secreted. Its subcellular location is the extracellular space. The protein localises to the extracellular matrix. It is found in the cytoplasm. Functionally, lectin that binds beta-galactoside and a wide array of complex carbohydrates. Plays a role in regulating apoptosis, cell proliferation and cell differentiation. Inhibits CD45 protein phosphatase activity and therefore the dephosphorylation of Lyn kinase. Strong inducer of T-cell apoptosis. Plays a negative role in Th17 cell differentiation via activation of the receptor CD69. The protein is Galectin-1 of Homo sapiens (Human).